A 158-amino-acid polypeptide reads, in one-letter code: Transcription elongation factor GreA (158 aa).

Residues 53 to 73 adopt a coiled-coil conformation; the sequence is EQQSFVEGRIQEIEGKLSNAQ.

Belongs to the GreA/GreB family.

Necessary for efficient RNA polymerase transcription elongation past template-encoded arresting sites. The arresting sites in DNA have the property of trapping a certain fraction of elongating RNA polymerases that pass through, resulting in locked ternary complexes. Cleavage of the nascent transcript by cleavage factors such as GreA or GreB allows the resumption of elongation from the new 3'terminus. GreA releases sequences of 2 to 3 nucleotides. The sequence is that of Transcription elongation factor GreA from Alkalilimnicola ehrlichii (strain ATCC BAA-1101 / DSM 17681 / MLHE-1).